The primary structure comprises 282 residues: Putative peroxisomal biogenesis factor 19 (282 aa).

A disordered region spans residues 73–95; that stretch reads QEEAMKKAGADPSEGEGEQPLDP. Cys-279 bears the Cysteine methyl ester mark. Cys-279 is lipidated: S-farnesyl cysteine. The propeptide at 280 to 282 is removed in mature form; the sequence is SIM.

This sequence belongs to the peroxin-19 family.

Its subcellular location is the peroxisome. The sequence is that of Putative peroxisomal biogenesis factor 19 (prx-19) from Caenorhabditis elegans.